We begin with the raw amino-acid sequence, 183 residues long: Interleukin-36 beta (183 aa).

A propeptide spanning residues 1–30 is cleaved from the precursor; that stretch reads MMAFPPQSCVHVLPPKSIQMWEPNHNTMHG.

Belongs to the IL-1 family. In terms of assembly, interacts with cargo receptor TMED10; the interaction mediates the translocation from the cytoplasm into the ERGIC (endoplasmic reticulum-Golgi intermediate compartment) and thereby secretion. Post-translationally, N-terminal truncation leads to a dramatic enhancement of its activity (&gt;1000-fold).

It localises to the cytoplasm. Its subcellular location is the secreted. In terms of biological role, cytokine that binds to and signals through the IL1RL2/IL-36R receptor which in turn activates NF-kappa-B and MAPK signaling pathways in target cells linked to a pro-inflammatory response. Part of the IL-36 signaling system that is thought to be present in epithelial barriers and to take part in local inflammatory response; similar to the IL-1 system with which it shares the coreceptor IL1RAP. Stimulates production of interleukin-6 and interleukin-8 in synovial fibrobasts, articular chondrocytes and mature adipocytes. Induces expression of a number of antimicrobial peptides including beta-defensin 4 and beta-defensin 103 as well as a number of matrix metalloproteases. Seems to be involved in skin inflammatory response by acting on keratinocytes, dendritic cells and indirectly on T-cells to drive tissue infiltration, cell maturation and cell proliferation. Induces the production of pro-inflammatory cytokines in bone marrow-derived dendritic cells (BMDCs), including IL-12, Il-1 beta, IL-6, TNF-alpha and IL-23, and activates p38 MAPK phosphorylation in BMDCs. Involved in dendritic cell maturation by stimulating the surface expression of CD80, CD86 and MHC class II. Induces the production of IFN-gamma, IL-4 and IL-17 by T-helper 1 (Th1) cells, cultured CD4(+) T-cells and splenocytes. The polypeptide is Interleukin-36 beta (Mus musculus (Mouse)).